Consider the following 1301-residue polypeptide: ABC transporter BEA3 (1301 aa).

The segment at 1-30 is disordered; the sequence is MGKRTAENSAANGEGEEKHPEIGVDGRPEK. Residues 15–30 are compositionally biased toward basic and acidic residues; it reads GEEKHPEIGVDGRPEK. The next 4 helical transmembrane spans lie at 54 to 74, 103 to 123, 177 to 197, and 203 to 223; these read VGVIASIGVGITLPLLNIVFG, LYLLGLFLGRLVLGYITNFAF, LGVFVEYNATMIASIIVAFIY, and LVTFTAVVFITFSVSLVLPYI. The ABC transmembrane type-1 1 domain occupies 54 to 345; it reads VGVIASIGVG…ISTPLLAVSK (292 aa). An N-linked (GlcNAc...) asparagine glycan is attached at Asn-229. The next 2 membrane-spanning stretches (helical) occupy residues 281-301 and 313-333; these read FIALQYGLVFFSSYAAFGLAF and INQLGAIIVVLFSVMMIVTAM. Positions 378–667 constitute an ABC transporter 1 domain; the sequence is IILEDVTFAY…EAGLYYNLVN (290 aa). 413-420 contributes to the ATP binding site; that stretch reads GPSGSGKS. The segment covering 442 to 454 has biased composition (basic and acidic residues); that stretch reads VEKPTDKKNNGGK. Residues 442-461 form a disordered region; it reads VEKPTDKKNNGGKEEDEQEL. Asn-511 and Asn-618 each carry an N-linked (GlcNAc...) asparagine glycan. The segment at 682–708 is disordered; that stretch reads VIAKEERPSSVHEKAHTESTIEEKPLE. Positions 735–1024 constitute an ABC transmembrane type-1 2 domain; that stretch reads ALTLFFSACA…ALSFGPNVAQ (290 aa). 6 helical membrane passes run 745–765, 779–799, 858–878, 880–900, 961–981, and 987–1007; these read GAAVPFQAWLFAKVIIVFGYL, SLMWTVLAISAGLAYCATFFL, SVFIALWTLMGTIAIALAFAW, LALVSLCVVVPILLAAGYWRM, WVSLLYAFSDSATIGCQAIVL, and LLLSGEYDLESFFVCFMSVLN. The ABC transporter 2 domain occupies 1060-1296; sequence IELENIYFKY…RGVYWQMCQS (237 aa). ATP is bound at residue 1094–1101; that stretch reads GASGSGKS.

Belongs to the ABC transporter superfamily. ABCB family. Multidrug resistance exporter (TC 3.A.1.201) subfamily.

Its subcellular location is the cell membrane. Its function is as follows. ABC transporter; part of the gene cluster that mediates the biosynthesis of beauvericin (BEA), a non-ribosomal cyclic hexadepsipeptide that shows antibiotic, antifungal, insecticidal, and cancer cell antiproliferative and antihaptotactic activity. Functions as a regulator of beauvericin production, rather than in BEA transport out of the cell. Beauvericin has low toxicity to the producing fungus and BEA3 does not play a role in detoxification and self-protection of the producing fungus. This is ABC transporter BEA3 from Gibberella fujikuroi (strain CBS 195.34 / IMI 58289 / NRRL A-6831) (Bakanae and foot rot disease fungus).